Here is a 422-residue protein sequence, read N- to C-terminus: MDLENKMKKMGLGHEQGFGAPCLKCKEKCEGFELHFWRKICRNCKCGQEEHDVFMSNEEDRKVGKLFEDTKYTTLIAKLKTDGIPMYKRNVMILTNPVPAKKNVSINTVTYEWAPPVQNQALARRYMQMLPRNKQPVAGSEGAQYRKKQLAKQLPAHDQDPSKCHELTPNEVKQMEQFVKKYKNEALGVGDVKLPSEMDVKPGDRSSLDGGDRGTTAEVGAVEDKSSADKKEDYSCYCCKQSMKEGDPAVYAERAGYDKFWHPACFICNTCSELLVDMIYFWKNGKLFCGRHYCDSEKPRCAGCDELIFSNEYTQAEDQNWHLKHFCCFDCDSILAGEIYVMVDNKPICKPCYVRNHAVICQGCHNAIDPEVQRVTYNNFNWHATEECFLCSCCSKCLIGQKFIPIEAMLFCSVECKKMMMS.

One can recognise a PET domain in the interval 92-199 (MILTNPVPAK…GDVKLPSEMD (108 aa)). 2 disordered regions span residues 135-162 (QPVA…QDPS) and 194-226 (LPSE…EDKS). The segment covering 194–212 (LPSEMDVKPGDRSSLDGGD) has biased composition (basic and acidic residues). LIM zinc-binding domains follow at residues 234-297 (YSCY…CDSE), 299-359 (PRCA…NHAV), and 362-422 (QGCH…MMMS).

This sequence belongs to the prickle / espinas / testin family. As to quaternary structure, interacts via LIM domain 1 with ZYX. Interacts (via LIM domain 3) with ENAH and VASP. Interacts with ALKBH4, talin, actin, alpha-actinin, GRIP1 and PXN. Interacts (via LIM domain 2) with ACTL7A (via N-terminus). Heterodimer with ACTL7A; the heterodimer interacts with ENAH to form a heterotrimer.

It localises to the cytoplasm. The protein localises to the cell junction. The protein resides in the focal adhesion. Its function is as follows. Scaffold protein that may play a role in cell adhesion, cell spreading and in the reorganization of the actin cytoskeleton. Plays a role in the regulation of cell proliferation. May act as a tumor suppressor. The polypeptide is Testin (TES) (Monodelphis domestica (Gray short-tailed opossum)).